A 333-amino-acid polypeptide reads, in one-letter code: tRNA N6-adenosine threonylcarbamoyltransferase (333 aa).

Positions 111 and 115 each coordinate Fe cation. Substrate-binding positions include 134–138 (VVSGG), Asp-167, Gly-180, Asp-184, and Asn-273. Asp-302 is a Fe cation binding site.

It belongs to the KAE1 / TsaD family. It depends on Fe(2+) as a cofactor.

It is found in the cytoplasm. It carries out the reaction L-threonylcarbamoyladenylate + adenosine(37) in tRNA = N(6)-L-threonylcarbamoyladenosine(37) in tRNA + AMP + H(+). Its function is as follows. Required for the formation of a threonylcarbamoyl group on adenosine at position 37 (t(6)A37) in tRNAs that read codons beginning with adenine. Is involved in the transfer of the threonylcarbamoyl moiety of threonylcarbamoyl-AMP (TC-AMP) to the N6 group of A37, together with TsaE and TsaB. TsaD likely plays a direct catalytic role in this reaction. The sequence is that of tRNA N6-adenosine threonylcarbamoyltransferase from Anaeromyxobacter sp. (strain Fw109-5).